The chain runs to 687 residues: Polyphosphate kinase (687 aa).

ATP is bound at residue Asn45. Residues Arg375 and Arg405 each coordinate Mg(2+). His435 functions as the Phosphohistidine intermediate in the catalytic mechanism. Residues Tyr472, Arg568, and His596 each coordinate ATP.

This sequence belongs to the polyphosphate kinase 1 (PPK1) family. It depends on Mg(2+) as a cofactor. An intermediate of this reaction is the autophosphorylated ppk in which a phosphate is covalently linked to a histidine residue through a N-P bond.

The catalysed reaction is [phosphate](n) + ATP = [phosphate](n+1) + ADP. In terms of biological role, catalyzes the reversible transfer of the terminal phosphate of ATP to form a long-chain polyphosphate (polyP). This chain is Polyphosphate kinase, found in Burkholderia vietnamiensis (strain G4 / LMG 22486) (Burkholderia cepacia (strain R1808)).